The sequence spans 427 residues: Gamma-glutamyl phosphate reductase (427 aa).

This sequence belongs to the gamma-glutamyl phosphate reductase family.

The protein resides in the cytoplasm. It catalyses the reaction L-glutamate 5-semialdehyde + phosphate + NADP(+) = L-glutamyl 5-phosphate + NADPH + H(+). Its pathway is amino-acid biosynthesis; L-proline biosynthesis; L-glutamate 5-semialdehyde from L-glutamate: step 2/2. In terms of biological role, catalyzes the NADPH-dependent reduction of L-glutamate 5-phosphate into L-glutamate 5-semialdehyde and phosphate. The product spontaneously undergoes cyclization to form 1-pyrroline-5-carboxylate. The protein is Gamma-glutamyl phosphate reductase of Rhizobium meliloti (strain 1021) (Ensifer meliloti).